A 264-amino-acid polypeptide reads, in one-letter code: Tropomyosin Cha f 1.0101 (264 aa).

An N-acetylmethionine modification is found at Met-1. Disordered regions lie at residues 1-56 and 92-126; these read MDAI…VENE and IQLP…SERM. Residues 1–264 are a coiled coil; sequence MDAIKKKMQA…RLEDELVNEK (264 aa). Basic and acidic residues predominate over residues 12 to 45; that stretch reads KLEKDNAMDRADTLEQQNKEANLRAEKTEEEIRA.

The protein belongs to the tropomyosin family. As to quaternary structure, homodimer. In terms of tissue distribution, expressed in muscle (at protein level). Expressed in claw muscles.

Tropomyosin, in association with the troponin complex, plays a central role in the calcium dependent regulation of muscle contraction. The sequence is that of Tropomyosin Cha f 1.0101 from Charybdis feriata (Crucifix crab).